Reading from the N-terminus, the 181-residue chain is Bifunctional protein PyrR (181 aa).

The PRPP-binding motif lies at 101-113; the sequence is VILVDDVLFTGRT.

It belongs to the purine/pyrimidine phosphoribosyltransferase family. PyrR subfamily.

It carries out the reaction UMP + diphosphate = 5-phospho-alpha-D-ribose 1-diphosphate + uracil. Regulates the transcription of the pyrimidine nucleotide (pyr) operon in response to exogenous pyrimidines. Functionally, also displays a weak uracil phosphoribosyltransferase activity which is not physiologically significant. The protein is Bifunctional protein PyrR of Desulfosudis oleivorans (strain DSM 6200 / JCM 39069 / Hxd3) (Desulfococcus oleovorans).